The sequence spans 377 residues: Probable tRNA pseudouridine synthase D (377 aa).

Aspartate 89 serves as the catalytic Nucleophile. One can recognise a TRUD domain in the interval 160–377; the sequence is YLPAFIGYQR…ILRGDPRKFT (218 aa).

Belongs to the pseudouridine synthase TruD family.

The enzyme catalyses uridine(13) in tRNA = pseudouridine(13) in tRNA. In terms of biological role, could be responsible for synthesis of pseudouridine from uracil-13 in transfer RNAs. This is Probable tRNA pseudouridine synthase D from Saccharolobus solfataricus (strain ATCC 35092 / DSM 1617 / JCM 11322 / P2) (Sulfolobus solfataricus).